The following is a 178-amino-acid chain: Oligoribonuclease (178 aa).

Positions 7-168 constitute an Exonuclease domain; the sequence is LIWIDLEMTG…DDIRESIAEL (162 aa). Y128 is a catalytic residue.

The protein belongs to the oligoribonuclease family.

It localises to the cytoplasm. Its function is as follows. 3'-to-5' exoribonuclease specific for small oligoribonucleotides. This Pseudomonas savastanoi pv. phaseolicola (strain 1448A / Race 6) (Pseudomonas syringae pv. phaseolicola (strain 1448A / Race 6)) protein is Oligoribonuclease.